We begin with the raw amino-acid sequence, 264 residues long: Thiazole synthase (264 aa).

The active-site Schiff-base intermediate with DXP is Lys106. 1-deoxy-D-xylulose 5-phosphate is bound by residues Gly167, 193–194, and 215–216; these read AG and NS.

The protein belongs to the ThiG family. Homotetramer. Forms heterodimers with either ThiH or ThiS.

It localises to the cytoplasm. The enzyme catalyses [ThiS sulfur-carrier protein]-C-terminal-Gly-aminoethanethioate + 2-iminoacetate + 1-deoxy-D-xylulose 5-phosphate = [ThiS sulfur-carrier protein]-C-terminal Gly-Gly + 2-[(2R,5Z)-2-carboxy-4-methylthiazol-5(2H)-ylidene]ethyl phosphate + 2 H2O + H(+). It functions in the pathway cofactor biosynthesis; thiamine diphosphate biosynthesis. Its function is as follows. Catalyzes the rearrangement of 1-deoxy-D-xylulose 5-phosphate (DXP) to produce the thiazole phosphate moiety of thiamine. Sulfur is provided by the thiocarboxylate moiety of the carrier protein ThiS. In vitro, sulfur can be provided by H(2)S. This chain is Thiazole synthase, found in Ectopseudomonas mendocina (strain ymp) (Pseudomonas mendocina).